A 445-amino-acid chain; its full sequence is RING finger and transmembrane domain-containing protein 2 (445 aa).

At Met1–Lys183 the chain is on the extracellular side. The disordered stretch occupies residues Lys12–Asp41. A helical transmembrane segment spans residues Leu184 to Leu203. Over Arg204–Val215 the chain is Cytoplasmic. A helical membrane pass occupies residues Leu216–Phe236. The Extracellular segment spans residues Ser237 to Asp256. Residues Phe257 to Ala277 traverse the membrane as a helical segment. Residues Leu278–Ser330 lie on the Cytoplasmic side of the membrane. A helical membrane pass occupies residues Tyr331–Gly351. At Arg352–Tyr445 the chain is on the extracellular side. Residues Cys385–Arg423 form an RING-type zinc finger.

It localises to the membrane. In terms of biological role, E3 ubiquitin-protein ligase that negatively regulates IL3-dependent cellular responses through IL3RA ubiquitination and degradation by the proteasome, having an anti-inflammatory effect. The protein is RING finger and transmembrane domain-containing protein 2 (Rnft2) of Mus musculus (Mouse).